Here is a 125-residue protein sequence, read N- to C-terminus: Holo-[acyl-carrier-protein] synthase (125 aa).

2 residues coordinate Mg(2+): aspartate 8 and glutamate 57.

Belongs to the P-Pant transferase superfamily. AcpS family. Requires Mg(2+) as cofactor.

It is found in the cytoplasm. It catalyses the reaction apo-[ACP] + CoA = holo-[ACP] + adenosine 3',5'-bisphosphate + H(+). Functionally, transfers the 4'-phosphopantetheine moiety from coenzyme A to a Ser of acyl-carrier-protein. This Nitrosomonas eutropha (strain DSM 101675 / C91 / Nm57) protein is Holo-[acyl-carrier-protein] synthase.